The primary structure comprises 349 residues: Anthranilate phosphoribosyltransferase (349 aa).

5-phospho-alpha-D-ribose 1-diphosphate-binding positions include G82, 85–86, 92–95, 110–118, and S122; these read GD, NVST, and KHGNRAVSG. Anthranilate is bound at residue G82. S94 provides a ligand contact to Mg(2+). N113 is a binding site for anthranilate. An anthranilate-binding site is contributed by R168. The Mg(2+) site is built by D227 and E228.

It belongs to the anthranilate phosphoribosyltransferase family. As to quaternary structure, homodimer. It depends on Mg(2+) as a cofactor.

The catalysed reaction is N-(5-phospho-beta-D-ribosyl)anthranilate + diphosphate = 5-phospho-alpha-D-ribose 1-diphosphate + anthranilate. The protein operates within amino-acid biosynthesis; L-tryptophan biosynthesis; L-tryptophan from chorismate: step 2/5. Its function is as follows. Catalyzes the transfer of the phosphoribosyl group of 5-phosphorylribose-1-pyrophosphate (PRPP) to anthranilate to yield N-(5'-phosphoribosyl)-anthranilate (PRA). In Pseudomonas entomophila (strain L48), this protein is Anthranilate phosphoribosyltransferase.